The primary structure comprises 233 residues: Purine nucleoside phosphorylase DeoD-type (233 aa).

H4 contributes to the a purine D-ribonucleoside binding site. Phosphate is bound by residues G20, R24, R43, and 87–90 (RIGT). A purine D-ribonucleoside is bound by residues 179–181 (EME) and 203–204 (SD). Residue D204 is the Proton donor of the active site.

This sequence belongs to the PNP/UDP phosphorylase family. Homohexamer; trimer of homodimers.

It carries out the reaction a purine D-ribonucleoside + phosphate = a purine nucleobase + alpha-D-ribose 1-phosphate. It catalyses the reaction a purine 2'-deoxy-D-ribonucleoside + phosphate = a purine nucleobase + 2-deoxy-alpha-D-ribose 1-phosphate. In terms of biological role, catalyzes the reversible phosphorolytic breakdown of the N-glycosidic bond in the beta-(deoxy)ribonucleoside molecules, with the formation of the corresponding free purine bases and pentose-1-phosphate. This Helicobacter pylori (strain ATCC 700392 / 26695) (Campylobacter pylori) protein is Purine nucleoside phosphorylase DeoD-type.